The following is an 883-amino-acid chain: Phosphoenolpyruvate carboxylase (883 aa).

Catalysis depends on residues histidine 138 and lysine 546.

This sequence belongs to the PEPCase type 1 family. Requires Mg(2+) as cofactor.

The enzyme catalyses oxaloacetate + phosphate = phosphoenolpyruvate + hydrogencarbonate. In terms of biological role, forms oxaloacetate, a four-carbon dicarboxylic acid source for the tricarboxylic acid cycle. The polypeptide is Phosphoenolpyruvate carboxylase (Salmonella choleraesuis (strain SC-B67)).